We begin with the raw amino-acid sequence, 350 residues long: Dihydroorotase (350 aa).

Zn(2+)-binding residues include His17 and His19. Residues 19 to 21 (HLR) and Asn45 each bind substrate. Zn(2+) is bound by residues Lys103, His140, and His178. N6-carboxylysine is present on Lys103. A substrate-binding site is contributed by His140. Leu223 is a substrate binding site. Asp251 contacts Zn(2+). Asp251 is a catalytic residue. The substrate site is built by His255 and Ala267.

It belongs to the metallo-dependent hydrolases superfamily. DHOase family. Class II DHOase subfamily. Homodimer. Zn(2+) serves as cofactor.

The enzyme catalyses (S)-dihydroorotate + H2O = N-carbamoyl-L-aspartate + H(+). It functions in the pathway pyrimidine metabolism; UMP biosynthesis via de novo pathway; (S)-dihydroorotate from bicarbonate: step 3/3. Catalyzes the reversible cyclization of carbamoyl aspartate to dihydroorotate. The protein is Dihydroorotase of Erwinia tasmaniensis (strain DSM 17950 / CFBP 7177 / CIP 109463 / NCPPB 4357 / Et1/99).